Here is a 126-residue protein sequence, read N- to C-terminus: Large ribosomal subunit protein uL22 (126 aa).

The protein belongs to the universal ribosomal protein uL22 family. In terms of assembly, part of the 50S ribosomal subunit.

This protein binds specifically to 23S rRNA; its binding is stimulated by other ribosomal proteins, e.g. L4, L17, and L20. It is important during the early stages of 50S assembly. It makes multiple contacts with different domains of the 23S rRNA in the assembled 50S subunit and ribosome. Its function is as follows. The globular domain of the protein is located near the polypeptide exit tunnel on the outside of the subunit, while an extended beta-hairpin is found that lines the wall of the exit tunnel in the center of the 70S ribosome. The protein is Large ribosomal subunit protein uL22 of Rhodospirillum rubrum (strain ATCC 11170 / ATH 1.1.1 / DSM 467 / LMG 4362 / NCIMB 8255 / S1).